Here is a 394-residue protein sequence, read N- to C-terminus: Subtilisin-like protease CPC735_005570 (394 aa).

Residues 1 to 21 (MRAIISVALFLSLSLLSAVNA) form the signal peptide. Positions 22–114 (AEILSAGDTD…IEHDRIANAR (93 aa)) are excised as a propeptide. One can recognise an Inhibitor I9 domain in the interval 37-110 (SYIVVMRDGL…AVKYIEHDRI (74 aa)). One can recognise a Peptidase S8 domain in the interval 123–394 (GWNLARISHK…RLLLYNGSGR (272 aa)). Catalysis depends on charge relay system residues D155 and H186. Residues N216 and N247 are each glycosylated (N-linked (GlcNAc...) asparagine). Residue S340 is the Charge relay system of the active site. N-linked (GlcNAc...) asparagine glycans are attached at residues N382 and N390.

It belongs to the peptidase S8 family.

Its subcellular location is the secreted. Secreted subtilisin-like serine protease with keratinolytic activity that contributes to pathogenicity. The protein is Subtilisin-like protease CPC735_005570 of Coccidioides posadasii (strain C735) (Valley fever fungus).